The following is a 440-amino-acid chain: MIPKKTKLKSREIEVPGDKSLSHRSVLFAALSKGKSKVTGFLEAEDPLNTMSAFAKLGLKVQKVKPGEYEFESPGKNKLVSPNVDLDFGNAGTGIRLSAGLICGLPGINATLTGDNSLKKRPMGRIIKPLSSMGASIVGLGEKETAPLKIEGKKLKGFRYESPIASAQVKSCLMLAAISSETDLEYSENILSRDHTENMFRFLGNKIEQISPLHFKIKPPYVLNGGEFRVPGDISSAAFFLVLGVLAKEGNLLIKNIGLNPARTGILTALQSMGAKIEIQNKRIECGETVGDLKTYPSNLKKSNIPESLIPSIIDEIPILSVAGFFAEGGFEIRHAEELRAKESDRIHTMVSNFRELGIEVEEYTDGYSFDGTSKKSSEVWTRLSTVKKIPIQSYMDHRIAMSFLIFKTLSGLDLQIDETSWIETSFPGFEKLLESCINE.

3 residues coordinate 3-phosphoshikimate: K19, S20, and R24. Position 19 (K19) interacts with phosphoenolpyruvate. 2 residues coordinate phosphoenolpyruvate: G92 and R121. Positions 166, 168, 315, and 342 each coordinate 3-phosphoshikimate. Q168 is a phosphoenolpyruvate binding site. The Proton acceptor role is filled by D315. Positions 346 and 399 each coordinate phosphoenolpyruvate.

It belongs to the EPSP synthase family. Monomer.

It localises to the cytoplasm. It catalyses the reaction 3-phosphoshikimate + phosphoenolpyruvate = 5-O-(1-carboxyvinyl)-3-phosphoshikimate + phosphate. The protein operates within metabolic intermediate biosynthesis; chorismate biosynthesis; chorismate from D-erythrose 4-phosphate and phosphoenolpyruvate: step 6/7. Catalyzes the transfer of the enolpyruvyl moiety of phosphoenolpyruvate (PEP) to the 5-hydroxyl of shikimate-3-phosphate (S3P) to produce enolpyruvyl shikimate-3-phosphate and inorganic phosphate. This Leptospira interrogans serogroup Icterohaemorrhagiae serovar Lai (strain 56601) protein is 3-phosphoshikimate 1-carboxyvinyltransferase.